The primary structure comprises 446 residues: Glutamine synthetase (446 aa).

Positions 15 to 102 constitute a GS beta-grasp domain; it reads RDIRFVRLWF…MFCDITMPDG (88 aa). The GS catalytic domain occupies 109-446; it reads SRHVLRRQLA…PYELKNYLSL (338 aa). Mg(2+) is bound by residues Glu-132 and Glu-134. ATP is bound at residue Glu-184. Glu-189 and Glu-196 together coordinate Mg(2+). Gly-241 contacts L-glutamate. His-245 contacts Mg(2+). Residues 247 to 249 and Ser-249 contribute to the ATP site; that span reads HMS. L-glutamate is bound by residues Arg-298, Glu-304, and Arg-316. Residues Arg-316 and Arg-321 each contribute to the ATP site. Glu-336 serves as a coordination point for Mg(2+). Arg-338 provides a ligand contact to L-glutamate. An Isoglutamyl lysine isopeptide (Lys-Gln) (interchain with Q-Cter in protein Pup) cross-link involves residue Lys-363.

This sequence belongs to the glutamine synthetase family. In terms of assembly, oligomer of 12 subunits arranged in the form of two hexagons. In its feedback-inhibited form, interacts with TnrA in order to block its DNA-binding activity. The cofactor is Mg(2+).

It localises to the cytoplasm. The enzyme catalyses L-glutamate + NH4(+) + ATP = L-glutamine + ADP + phosphate + H(+). With respect to regulation, inhibited by glutamine. Its function is as follows. Glutamine synthetase (GS) is an unusual multitasking protein that functions as an enzyme, a transcription coregulator, and a chaperone in ammonium assimilation and in the regulation of genes involved in nitrogen metabolism. It catalyzes the ATP-dependent biosynthesis of glutamine from glutamate and ammonia. Feedback-inhibited GlnA also interacts with and regulates the activity of the transcriptional regulator TnrA. During nitrogen limitation, TnrA is in its DNA-binding active state and turns on the transcription of genes required for nitrogen assimilation. Under conditions of nitrogen excess, feedback-inhibited GlnA forms a stable complex with TnrA, which inhibits its DNA-binding activity. In contrast, feedback-inhibited GlnA acts as a chaperone to stabilize the DNA-binding activity of GlnR, which represses the transcription of nitrogen assimilation genes. This is Glutamine synthetase from Mycolicibacterium smegmatis (strain ATCC 700084 / mc(2)155) (Mycobacterium smegmatis).